The sequence spans 316 residues: MVELDYLFLGSVGFLTIALMLIILRIIKLYFDEKQARKRKEALSAMAADEHAARNERDVVVVGGRRVQTARRRVRHNVDDGNNDDMGFVRNAIDQNGDISEQEDLPSADLARDEHFGKKKLAKLQAKEERRKQREAELLEREERKKLEQEKEKRLQKEREKQMEQEEEERKRKCREREEREKREEEEYKKLRETFAVDEEGFDQTDGEESQNLLRDFVEYVRKTKVVNIDELGAHFNLRTEDAVDRLNFLVGNGTLTGIMDDRGKFIHITSEELQAVAKFINQRGRVSKAELIEYSNKLIALESRCVEHVSELTAA.

Residues Met1–Glu3 are Lumenal-facing. Residues Leu4 to Leu24 traverse the membrane as a helical segment. The Cytoplasmic portion of the chain corresponds to Arg25–Ala316. The interval Leu147–Glu187 is disordered.

It belongs to the DDRGK1 family.

The protein resides in the endoplasmic reticulum membrane. Substrate adapter for ufmylation, the covalent attachment of the ubiquitin-like modifier UFM1 to substrate proteins. The protein is DDRGK domain-containing protein 1 of Brugia malayi (Filarial nematode worm).